We begin with the raw amino-acid sequence, 428 residues long: Hydrolase acrC (428 aa).

Ser248 is a catalytic residue.

The protein belongs to the AB hydrolase superfamily. FUS2 hydrolase family.

The protein operates within secondary metabolite biosynthesis. In terms of biological role, hydrolase; part of the cluster that mediates the biosynthesis of acurin A, a highly reduced polyketide coupled to a serine via a peptide bond. The activities of the highly reducing polyketide synthase acrA and the nonribosomal peptide synthetase acrB are collectively responsible for the synthesis of the acurin A core structure with a heptaketide backbone produced by acrA covalently fused to a L-serine by acrB. After the formation of the PK-NRP hybrid product, it is detached from acrB by reductive release to set up the formation of the lactam ring by aldol condensation. The hydrolyase acrC then catalyzes water loss to generate a double bond in the ring. This double bond is probably reduced, which is followed by three oxidations at C-22 to generate the carboxylic acid moiety, involving probably the FAD-binding monooxygenase acrE and the cytochrome P450 monooxygenases acrD and acrF. Finally, a last methylation step performed by the O-methyltransferase acrG leads to the production of acurin A. The sequence is that of Hydrolase acrC from Aspergillus aculeatus (strain ATCC 16872 / CBS 172.66 / WB 5094).